We begin with the raw amino-acid sequence, 188 residues long: FMN reductase (NADH) RutF (188 aa).

It belongs to the non-flavoprotein flavin reductase family. RutF subfamily.

The catalysed reaction is FMNH2 + NAD(+) = FMN + NADH + 2 H(+). Catalyzes the reduction of FMN to FMNH2 which is used to reduce pyrimidine by RutA via the Rut pathway. This is FMN reductase (NADH) RutF from Acinetobacter baylyi (strain ATCC 33305 / BD413 / ADP1).